Consider the following 160-residue polypeptide: Large ribosomal subunit protein uL16 (160 aa).

Residues 138–160 form a disordered region; sequence KNLENSSQENTKDSKKSQEEVKQ. The segment covering 147-160 has biased composition (basic and acidic residues); the sequence is NTKDSKKSQEEVKQ.

This sequence belongs to the universal ribosomal protein uL16 family. In terms of assembly, part of the 50S ribosomal subunit.

In terms of biological role, binds 23S rRNA and is also seen to make contacts with the A and possibly P site tRNAs. This chain is Large ribosomal subunit protein uL16, found in Prochlorococcus marinus (strain AS9601).